The primary structure comprises 200 residues: Prolactin (200 aa).

Cystine bridges form between Cys4-Cys11, Cys59-Cys175, and Cys192-Cys200.

This sequence belongs to the somatotropin/prolactin family. Pituitary gland.

Its subcellular location is the secreted. This is Prolactin (prl) from Protopterus aethiopicus (Marbled lungfish).